Consider the following 89-residue polypeptide: Mitochondrial import inner membrane translocase subunit Tim9 (89 aa).

At A2 the chain carries N-acetylalanine. A Twin CX3C motif motif is present at residues 28 to 52; the sequence is CFLDCVKDFTTREVKPEEVTCSEHC. 2 disulfides stabilise this stretch: C28/C52 and C32/C48.

It belongs to the small Tim family. As to quaternary structure, heterohexamer; composed of 3 copies of TIMM9 and 3 copies of TIMM10/TIM10A, named soluble 70 kDa complex. The complex forms a 6-bladed alpha-propeller structure and associates with the TIMM22 component of the TIM22 complex. Interacts with multi-pass transmembrane proteins in transit. Also forms a complex composed of TIMM9, TIMM10/TIM10A and FXC1/TIM10B.

The protein resides in the mitochondrion inner membrane. Mitochondrial intermembrane chaperone that participates in the import and insertion of multi-pass transmembrane proteins into the mitochondrial inner membrane. May also be required for the transfer of beta-barrel precursors from the TOM complex to the sorting and assembly machinery (SAM complex) of the outer membrane. Acts as a chaperone-like protein that protects the hydrophobic precursors from aggregation and guide them through the mitochondrial intermembrane space. This is Mitochondrial import inner membrane translocase subunit Tim9 (Timm9) from Rattus norvegicus (Rat).